An 84-amino-acid chain; its full sequence is Omega-theraphotoxin-Pm1a (84 aa).

An N-terminal signal peptide occupies residues Met1–Ala21. Residues Thr22 to Arg45 constitute a propeptide that is removed on maturation. 3 disulfides stabilise this stretch: Cys52–Cys66, Cys59–Cys71, and Cys65–Cys78.

Belongs to the neurotoxin 10 (Hwtx-1) family. 41 (Jztx-36) subfamily. As to expression, expressed by the venom gland.

It localises to the secreted. Omega-conotoxins act at presynaptic membranes, they bind and block voltage-gated calcium channels (Cav). This toxin inhibits barium currents (IBa) mediated by L-type voltage-gated calcium channels Cav1.2/CACNA1C (IC(50)=825 nM) and Cav1.3/CACNA1C (IC(50)=2240 nM). In Pelinobius muticus (King baboon spider), this protein is Omega-theraphotoxin-Pm1a.